The sequence spans 229 residues: Large ribosomal subunit protein bL19cy (229 aa).

A chloroplast-targeting transit peptide spans 1–70 (MATSSHLLPQ…DSKKRKEFIA (70 aa)).

It belongs to the bacterial ribosomal protein bL19 family. Part of the 50S ribosomal subunit.

The protein resides in the plastid. The protein localises to the chloroplast. In terms of biological role, located at the 30S-50S ribosomal subunit interface and binds directly to 23S ribosomal RNA. This Arabidopsis thaliana (Mouse-ear cress) protein is Large ribosomal subunit protein bL19cy.